Reading from the N-terminus, the 181-residue chain is Ribulose bisphosphate carboxylase small subunit, chloroplastic 2 (181 aa).

A chloroplast-targeting transit peptide spans 1–57 (MASSVISSAAVATRTNVTQAGSMIAPFTGLKSAATFPVSRKQNLDITSIASNGGRVR).

The protein belongs to the RuBisCO small chain family. Heterohexadecamer of 8 large and 8 small subunits.

It localises to the plastid. The protein resides in the chloroplast. In terms of biological role, ruBisCO catalyzes two reactions: the carboxylation of D-ribulose 1,5-bisphosphate, the primary event in carbon dioxide fixation, as well as the oxidative fragmentation of the pentose substrate. Both reactions occur simultaneously and in competition at the same active site. Although the small subunit is not catalytic it is essential for maximal activity. In Solanum tuberosum (Potato), this protein is Ribulose bisphosphate carboxylase small subunit, chloroplastic 2.